A 39-amino-acid polypeptide reads, in one-letter code: Hementin (39 aa).

A divalent metal cation is required as a cofactor. In terms of tissue distribution, expressed mainly in the posterior salivary glands and, to a lesser extent, in the anterior salivary glands and secreted into the proboscis (at protein level).

The protein localises to the secreted. Inhibited by EDTA, cysteine, DTT and sodium phosphate. Partially inhibited by EGTA, citrate, Tris and glycine. Not inhibited by DFP, PMSF, iodoacetic acid and leupeptin. Requires sodium chloride concentrations higher than 0.15 M for activity. In terms of biological role, metalloprotease with anticoagulant activity. Cleaves fibrinogen Aalpha (FGA), gamma (FGG) and Bbeta (FGB) chains after positions 'Asn-121', 'Lys-160' and 'Pro-102', respectively. Breaks down cross-linked and non-cross-linked fibrin clots. Prevents and reverts platelet aggregation induced by ADP and collagen. Prevents thrombin-induced platelet clotting. Does not affect plasma levels of coagulation factors prothrombin (F2), V (F5), VII (F7), VIII (F8), IX (F9), X (F10), XI (F11), XII (F12), plasma kallikrein (KLKB1) and kininogen-1 (KNG1). In Haementeria ghilianii (Amazon leech), this protein is Hementin.